The primary structure comprises 561 residues: 3-hydroxy-3-methylglutaryl-coenzyme A reductase 3 (561 aa).

Helical transmembrane passes span 25 to 45 (PIRHTNLIFSALFAASLAYLM) and 69 to 89 (IFGLVASLIYLLSFFGIAFVQ). The linker stretch occupies residues 90 to 145 (SIVSSSDDEEEDFLVGPARGSSAAAAVAPPPPPSSPAQCSLLGSPHDDAARERMPE). Positions 113–146 (AAAVAPPPPPSSPAQCSLLGSPHDDAARERMPEE) are disordered. Basic and acidic residues predominate over residues 134-143 (PHDDAARERM). A catalytic region spans residues 146 to 561 (EDEEIVSSVV…SSKDMSKVIS (416 aa)). Catalysis depends on Glu240, which acts as the Charge relay system. The N-linked (GlcNAc...) asparagine glycan is linked to Asn304. Catalysis depends on charge relay system residues Lys372 and Asp448. His546 functions as the Proton donor in the catalytic mechanism. Asn550 is a glycosylation site (N-linked (GlcNAc...) asparagine).

Belongs to the HMG-CoA reductase family.

It localises to the endoplasmic reticulum membrane. The enzyme catalyses (R)-mevalonate + 2 NADP(+) + CoA = (3S)-3-hydroxy-3-methylglutaryl-CoA + 2 NADPH + 2 H(+). It participates in metabolic intermediate biosynthesis; (R)-mevalonate biosynthesis; (R)-mevalonate from acetyl-CoA: step 3/3. Catalyzes the synthesis of mevalonate. The specific precursor of all isoprenoid compounds present in plants. This is 3-hydroxy-3-methylglutaryl-coenzyme A reductase 3 (HMG3) from Oryza sativa subsp. japonica (Rice).